The following is a 208-amino-acid chain: ATP phosphoribosyltransferase (208 aa).

This sequence belongs to the ATP phosphoribosyltransferase family. Short subfamily. As to quaternary structure, heteromultimer composed of HisG and HisZ subunits.

The protein localises to the cytoplasm. It catalyses the reaction 1-(5-phospho-beta-D-ribosyl)-ATP + diphosphate = 5-phospho-alpha-D-ribose 1-diphosphate + ATP. Its pathway is amino-acid biosynthesis; L-histidine biosynthesis; L-histidine from 5-phospho-alpha-D-ribose 1-diphosphate: step 1/9. Its function is as follows. Catalyzes the condensation of ATP and 5-phosphoribose 1-diphosphate to form N'-(5'-phosphoribosyl)-ATP (PR-ATP). Has a crucial role in the pathway because the rate of histidine biosynthesis seems to be controlled primarily by regulation of HisG enzymatic activity. This is ATP phosphoribosyltransferase from Thermotoga petrophila (strain ATCC BAA-488 / DSM 13995 / JCM 10881 / RKU-1).